The following is an 836-amino-acid chain: CUB domain-containing protein 1 (836 aa).

Residues 1 to 29 (MAGLNCGVSIALLGVLLLGAARLPRGAEA) form the signal peptide. Residues 30 to 667 (FEIALPRESN…TLTPRTVDLT (638 aa)) lie on the Extracellular side of the membrane. N-linked (GlcNAc...) asparagine glycans are attached at residues asparagine 39, asparagine 122, asparagine 180, asparagine 205, asparagine 270, asparagine 310, and asparagine 386. Residues 417 to 544 (CTDHRYCQRK…VSFIPYFKEE (128 aa)) enclose the CUB domain. A disulfide bridge connects residues cysteine 476 and cysteine 499. The chain crosses the membrane as a helical span at residues 668–688 (VILIAAVGGGVLLLSALGLII). The Cytoplasmic segment spans residues 689–836 (CCVKKKKKKT…NTQEPMEPAE (148 aa)). Tyrosine 734 is modified (phosphotyrosine). The interval 776–836 (PPTICSRAPT…NTQEPMEPAE (61 aa)) is disordered.

Interacts with CDH2/N-cadherin, CDH3/P-cadherin, SDC1/syndecan-1, SDC4/syndecan-4 and the serine protease ST14/MT-SP1. Also interacts with SRC and PRKCG/protein kinase C gamma. Post-translationally, phosphorylated on tyrosine by kinases of the SRC family such as SRC and YES as well as by the protein kinase C gamma/PRKCG. Dephosphorylated by phosphotyrosine phosphatases. Also phosphorylated by suramin, a heparin analog. Tyrosine phosphorylated in response to dissociation of integrin alpha-6 beta-4 from laminin-5. N-glycosylated. In terms of processing, a soluble form may also be produced by proteolytic cleavage at the cell surface (shedding). Another peptide of 80 kDa (p80) is present in cultured keratinocytes probably due to tryptic cleavage at an unidentified site on its N-terminal side. Converted to p80 by plasmin, a trypsin-like protease. As to expression, highly expressed in mitotic cells with low expression during interphase. Detected at highest levels in skeletal muscle and colon with lower levels in kidney, small intestine, placenta and lung. Up-regulated in a number of human tumor cell lines, as well as in colorectal cancer, breast carcinoma and lung cancer. Also expressed in cells with phenotypes reminiscent of mesenchymal stem cells and neural stem cells.

It localises to the cell membrane. Its subcellular location is the secreted. May be involved in cell adhesion and cell matrix association. May play a role in the regulation of anchorage versus migration or proliferation versus differentiation via its phosphorylation. May be a novel marker for leukemia diagnosis and for immature hematopoietic stem cell subsets. Belongs to the tetraspanin web involved in tumor progression and metastasis. The chain is CUB domain-containing protein 1 (CDCP1) from Homo sapiens (Human).